A 154-amino-acid polypeptide reads, in one-letter code: SsrA-binding protein (154 aa).

The disordered stretch occupies residues 134-154; the sequence is QREDLKRRAEDRDTQRELARF.

This sequence belongs to the SmpB family.

It is found in the cytoplasm. Required for rescue of stalled ribosomes mediated by trans-translation. Binds to transfer-messenger RNA (tmRNA), required for stable association of tmRNA with ribosomes. tmRNA and SmpB together mimic tRNA shape, replacing the anticodon stem-loop with SmpB. tmRNA is encoded by the ssrA gene; the 2 termini fold to resemble tRNA(Ala) and it encodes a 'tag peptide', a short internal open reading frame. During trans-translation Ala-aminoacylated tmRNA acts like a tRNA, entering the A-site of stalled ribosomes, displacing the stalled mRNA. The ribosome then switches to translate the ORF on the tmRNA; the nascent peptide is terminated with the 'tag peptide' encoded by the tmRNA and targeted for degradation. The ribosome is freed to recommence translation, which seems to be the essential function of trans-translation. The polypeptide is SsrA-binding protein (Nitratidesulfovibrio vulgaris (strain ATCC 29579 / DSM 644 / CCUG 34227 / NCIMB 8303 / VKM B-1760 / Hildenborough) (Desulfovibrio vulgaris)).